We begin with the raw amino-acid sequence, 144 residues long: Intraflagellar transport protein 25 homolog (144 aa).

3 residues coordinate Ca(2+): Asn29, Asp32, and Thr37.

The protein belongs to the IFT25 family. As to quaternary structure, component of the IFT complex B, at least composed of IFT20, IFT22, IFT25, IFT27, IFT46, IFT52, TRAF3IP1/IFT54, IFT57, IFT74, IFT80, IFT81, and IFT88. Interacts with IFT27. Interacts with IFT88. Detected in placenta.

The protein resides in the cell projection. It localises to the cilium. In terms of biological role, component of the IFT complex B required for sonic hedgehog/SHH signaling. May mediate transport of SHH components: required for the export of SMO and PTCH1 receptors out of the cilium and the accumulation of GLI2 at the ciliary tip in response to activation of the SHH pathway, suggesting it is involved in the dynamic transport of SHH signaling molecules within the cilium. Not required for ciliary assembly. Its role in intraflagellar transport is mainly seen in tissues rich in ciliated cells such as kidney and testis. Essential for male fertility, spermiogenesis and sperm flagella formation. Plays a role in the early development of the kidney. May be involved in the regulation of ureteric bud initiation. The sequence is that of Intraflagellar transport protein 25 homolog from Homo sapiens (Human).